We begin with the raw amino-acid sequence, 702 residues long: Choline transporter-like protein 5-A (702 aa).

The chain crosses the membrane as a helical span at residues 21–41; the sequence is VLCCVLFVIVILGYIALGTVA. Over 42–225 the chain is Extracellular; the sequence is WIHGDPRKVI…KIVEDYASCW (184 aa). N-linked (GlcNAc...) asparagine glycans are attached at residues Asn-120, Asn-173, and Asn-180. Residues 226–246 form a helical membrane-spanning segment; that stretch reads YWIVIGLFIALVISLIFILLL. The Cytoplasmic portion of the chain corresponds to 247–249; sequence RFT. The helical transmembrane segment at 250 to 270 threads the bilayer; the sequence is AGFLLWFIIFAVILLVAYGIW. Topologically, residues 271–308 are extracellular; sequence HCYWEFAVLRETPGADVTISDIGFQTDLHVYLQLSQTW. A helical membrane pass occupies residues 309–329; that stretch reads LVFMVTLGLTEASIVLMLIFL. The Cytoplasmic portion of the chain corresponds to 330–334; that stretch reads RKRVR. Residues 335 to 355 form a helical membrane-spanning segment; sequence IAIALLREGSRAISYIMSALF. Topologically, residues 356–357 are extracellular; the sequence is YP. The helical transmembrane segment at 358-378 threads the bilayer; sequence IITFVLLAICISYWAMTALFL. Residues 379 to 443 are Cytoplasmic-facing; that stretch reads ASSGDAVYKV…RYIFILQLCN (65 aa). Residues 444 to 464 form a helical membrane-spanning segment; sequence LLVFLWLVNFTIALGQCTVAG. Residues 465-498 lie on the Extracellular side of the membrane; that stretch reads AFASYYWARRKPADIPPCPVFSSFSRALRYHTGS. The chain crosses the membrane as a helical span at residues 499 to 519; sequence LAFGSLILAVVQLIRVILEYL. Residues 520-593 lie on the Cytoplasmic side of the membrane; the sequence is DHKLKGAHNA…RVAVLDKVTD (74 aa). Residues 594–614 form a helical membrane-spanning segment; sequence FLLFLGKLLIAGSVGVIAFFL. Topologically, residues 615–632 are extracellular; that stretch reads FTRKIPIIQEEVPVLNYY. The helical transmembrane segment at 633–653 threads the bilayer; that stretch reads CVPLLTVILGSYLIAHSFFSV. The Cytoplasmic portion of the chain corresponds to 654–699; sequence YAMCVDTLFLCFCEDLERNDGTTAKPFFMSPGLKRILGKAEQSPKK.

The protein belongs to the CTL (choline transporter-like) family.

It is found in the cell membrane. It catalyses the reaction choline(out) + n H(+)(in) = choline(in) + n H(+)(out). Its function is as follows. Choline/H+ antiporter. The protein is Choline transporter-like protein 5-A (slc44a5a) of Danio rerio (Zebrafish).